The primary structure comprises 786 residues: Endonuclease MutS2 (786 aa).

ATP is bound at residue 335 to 342; it reads GPNTGGKT. One can recognise a Smr domain in the interval 711 to 786; sequence LDLRGERFEN…GLGVTVVELK (76 aa).

This sequence belongs to the DNA mismatch repair MutS family. MutS2 subfamily. Homodimer. Binds to stalled ribosomes, contacting rRNA.

In terms of biological role, endonuclease that is involved in the suppression of homologous recombination and thus may have a key role in the control of bacterial genetic diversity. Functionally, acts as a ribosome collision sensor, splitting the ribosome into its 2 subunits. Detects stalled/collided 70S ribosomes which it binds and splits by an ATP-hydrolysis driven conformational change. Acts upstream of the ribosome quality control system (RQC), a ribosome-associated complex that mediates the extraction of incompletely synthesized nascent chains from stalled ribosomes and their subsequent degradation. Probably generates substrates for RQC. The protein is Endonuclease MutS2 of Bacillus cytotoxicus (strain DSM 22905 / CIP 110041 / 391-98 / NVH 391-98).